The following is a 350-amino-acid chain: Pleckstrin (350 aa).

The region spanning 4–101 (KRIREGYLVK…WVRDIKKAIK (98 aa)) is the PH 1 domain. The residue at position 64 (Lys64) is an N6-acetyllysine. Phosphoserine occurs at positions 113 and 117. Positions 136-221 (PEKGIKELNL…SPDAFYYFPD (86 aa)) constitute a DEP domain. Residues 244 to 347 (VIIKQGCLLK…WIKAIQVASR (104 aa)) form the PH 2 domain.

In terms of biological role, major protein kinase C substrate of platelets. The sequence is that of Pleckstrin (Plek) from Mus musculus (Mouse).